Reading from the N-terminus, the 1265-residue chain is Guanine nucleotide exchange factor SDC25 (1265 aa).

The SH3 domain maps to 26–97; it reads QPIDVVECTY…PPSFTRSILN (72 aa). Disordered stretches follow at residues 409–454 and 623–648; these read IPAS…DTIW and LNLD…DEYE. The span at 416 to 428 shows a compositional bias: low complexity; the sequence is TSCSSETSHHSPS. The N-terminal Ras-GEF domain maps to 782 to 914; it reads SNNRIKGGSK…LLKEVNQKFK (133 aa). In terms of domain architecture, Ras-GEF spans 952–1199; sequence DPVLFATQLT…YQLSLIIEPK (248 aa). Residues 1201 to 1252 form a disordered region; that stretch reads RKKVVPNSNSNNKSQEKSRDDQTDEGKTSTKKDRFSKFQLHKTKKKAPKVSK. Positions 1214-1236 are enriched in basic and acidic residues; that stretch reads SQEKSRDDQTDEGKTSTKKDRFS. Over residues 1239-1252 the composition is skewed to basic residues; that stretch reads QLHKTKKKAPKVSK.

Promotes the exchange of Ras-bound GDP by GTP. The polypeptide is Guanine nucleotide exchange factor SDC25 (SDC25) (Saccharomyces cerevisiae (strain AWRI1631) (Baker's yeast)).